We begin with the raw amino-acid sequence, 353 residues long: Protein CYTOKININ-RESPONSIVE GATA TRANSCRIPTION FACTOR 1 (353 aa).

Positions 137–144 match the Nuclear localization signal 1 motif; sequence IRKGAATD. The disordered stretch occupies residues 142–166; it reads ATDPEGGAVRKPRRRAQAHQDESQQ. The GATA-type zinc finger occupies 178 to 203; it reads CSDCNTTKTPLWRSGPCGPKSLCNAC. A Nuclear localization signal 2 motif is present at residues 244–251; that stretch reads EKRAADVD.

The protein belongs to the type IV zinc-finger family. Class B subfamily. As to expression, mostly expressed in leaves and stems, and, at low levels, in roots.

The protein resides in the nucleus. Its function is as follows. Transcriptional regulator that specifically binds 5'-GATA-3' or 5'-GAT-3' motifs within gene promoters. Influences the expression of nuclear encoded chloroplast-targeted genes. Regulates chloroplast development and promotes chlorophyll accumulation. Modulates plant architecture (e.g. height, length and width of leaf blades, and flowering tillers production) and represses tillering, probably by modulating number of cells. Promotes senescence. Involved in grain filling, panicle development and starch production. This Oryza sativa subsp. japonica (Rice) protein is Protein CYTOKININ-RESPONSIVE GATA TRANSCRIPTION FACTOR 1.